We begin with the raw amino-acid sequence, 481 residues long: Aspartyl/glutamyl-tRNA(Asn/Gln) amidotransferase subunit B (481 aa).

The protein belongs to the GatB/GatE family. GatB subfamily. In terms of assembly, heterotrimer of A, B and C subunits.

It carries out the reaction L-glutamyl-tRNA(Gln) + L-glutamine + ATP + H2O = L-glutaminyl-tRNA(Gln) + L-glutamate + ADP + phosphate + H(+). The enzyme catalyses L-aspartyl-tRNA(Asn) + L-glutamine + ATP + H2O = L-asparaginyl-tRNA(Asn) + L-glutamate + ADP + phosphate + 2 H(+). Allows the formation of correctly charged Asn-tRNA(Asn) or Gln-tRNA(Gln) through the transamidation of misacylated Asp-tRNA(Asn) or Glu-tRNA(Gln) in organisms which lack either or both of asparaginyl-tRNA or glutaminyl-tRNA synthetases. The reaction takes place in the presence of glutamine and ATP through an activated phospho-Asp-tRNA(Asn) or phospho-Glu-tRNA(Gln). This is Aspartyl/glutamyl-tRNA(Asn/Gln) amidotransferase subunit B from Ectopseudomonas mendocina (strain ymp) (Pseudomonas mendocina).